The following is a 138-amino-acid chain: Large ribosomal subunit protein bL19 (138 aa).

It belongs to the bacterial ribosomal protein bL19 family.

Functionally, this protein is located at the 30S-50S ribosomal subunit interface and may play a role in the structure and function of the aminoacyl-tRNA binding site. The polypeptide is Large ribosomal subunit protein bL19 (Rickettsia peacockii (strain Rustic)).